Reading from the N-terminus, the 175-residue chain is MTGKELNKIVAAILFASLIAMIVGFIANILYKPNLHVLHRGYSIAIQKSSSNESATVIAQESVNIQELMKTANANHGREIAKKCLMCHSLDKDGPNKLGPHLWNIVGRPKASITDYKYSFAISKLGGVWDDENLFAFLHKPSSYAPGTKMSFAGISKPQDIADVILFLKNYVHDQ.

Residues 1–8 (MTGKELNK) lie on the Cytoplasmic side of the membrane. The helical; Signal-anchor transmembrane segment at 9 to 29 (IVAAILFASLIAMIVGFIANI) threads the bilayer. Residues 30-175 (LYKPNLHVLH…LFLKNYVHDQ (146 aa)) lie on the Periplasmic side of the membrane. Heme c contacts are provided by Cys-84, Cys-87, His-88, and Met-150.

The protein belongs to the cytochrome c family. Binds 1 heme c group covalently per subunit.

It is found in the cell membrane. Functionally, may be involved in electron transfer from bc1 complex to aa3. The polypeptide is Cytochrome c homolog (cycM) (Rickettsia prowazekii (strain Madrid E)).